The following is a 513-amino-acid chain: Sphingosine-1-phosphate transporter SPNS2 (513 aa).

The next 11 membrane-spanning stretches (helical) occupy residues 102 to 122 (GLLQ…FGYL), 130 to 150 (VILS…SFIP), 163 to 183 (LVGI…GDLF), 190 to 210 (LMLS…YITG), 222 to 242 (WALR…LIFV), 276 to 296 (LATS…PLYL), 320 to 340 (LIFG…GAGA), 354 to 374 (LVCA…FVAA), 378 to 398 (IIAA…NWAI), 422 to 442 (TSHL…SDLI), and 463 to 483 (LCPF…LFFL).

It belongs to the major facilitator superfamily. Spinster (TC 2.A.1.49) family.

It localises to the cell membrane. The protein localises to the endosome membrane. It carries out the reaction sphing-4-enine 1-phosphate(in) = sphing-4-enine 1-phosphate(out). It catalyses the reaction sphinganine 1-phosphate(in) = sphinganine 1-phosphate(out). Its function is as follows. Lipid transporter that specifically mediates export of sphingosine-1-phosphate (sphing-4-enine 1-phosphate, S1P) and sphinganine-1-phosphate. This chain is Sphingosine-1-phosphate transporter SPNS2 (spns2), found in Xenopus tropicalis (Western clawed frog).